Reading from the N-terminus, the 224-residue chain is 7-cyano-7-deazaguanine synthase (224 aa).

8 to 18 (CSGGLDSTVAA) serves as a coordination point for ATP. Zn(2+) contacts are provided by Cys190, Cys198, Cys201, and Cys204.

The protein belongs to the QueC family. Zn(2+) serves as cofactor.

It catalyses the reaction 7-carboxy-7-deazaguanine + NH4(+) + ATP = 7-cyano-7-deazaguanine + ADP + phosphate + H2O + H(+). It participates in purine metabolism; 7-cyano-7-deazaguanine biosynthesis. Catalyzes the ATP-dependent conversion of 7-carboxy-7-deazaguanine (CDG) to 7-cyano-7-deazaguanine (preQ(0)). This chain is 7-cyano-7-deazaguanine synthase, found in Methanothrix thermoacetophila (strain DSM 6194 / JCM 14653 / NBRC 101360 / PT) (Methanosaeta thermophila).